A 102-amino-acid chain; its full sequence is NADH-quinone oxidoreductase subunit K (102 aa).

3 helical membrane passes run 5-25 (IMHY…GIFL), 31-51 (IIIL…FVAF), and 66-86 (FILT…VVFF).

Belongs to the complex I subunit 4L family. NDH-1 is composed of 14 different subunits. Subunits NuoA, H, J, K, L, M, N constitute the membrane sector of the complex.

Its subcellular location is the cell inner membrane. It carries out the reaction a quinone + NADH + 5 H(+)(in) = a quinol + NAD(+) + 4 H(+)(out). In terms of biological role, NDH-1 shuttles electrons from NADH, via FMN and iron-sulfur (Fe-S) centers, to quinones in the respiratory chain. The immediate electron acceptor for the enzyme in this species is believed to be ubiquinone. Couples the redox reaction to proton translocation (for every two electrons transferred, four hydrogen ions are translocated across the cytoplasmic membrane), and thus conserves the redox energy in a proton gradient. This Bartonella henselae (strain ATCC 49882 / DSM 28221 / CCUG 30454 / Houston 1) (Rochalimaea henselae) protein is NADH-quinone oxidoreductase subunit K.